The chain runs to 526 residues: Tyrosine-protein kinase transforming protein Src (526 aa).

The segment at 1 to 52 (MGSSKSKPKDPSQRRRSLEPPDSTHHGGFPASQTPDETAAPDAHRNPSRSFG) is disordered. The N-myristoyl glycine; by host moiety is linked to residue Gly2. Positions 7–25 (KPKDPSQRRRSLEPPDSTH) are enriched in basic and acidic residues. The region spanning 81-142 (GGVTTFVALY…PSNYVAPSDS (62 aa)) is the SH3 domain. In terms of domain architecture, SH2 spans 148 to 245 (WYFGKITRRE…GLCHRLTNVC (98 aa)). A Protein kinase domain is found at 267–517 (LRLEAKLGQG…TFKYLQAQLL (251 aa)). Residues 273–281 (LGQGCFGEV) and Lys295 contribute to the ATP site. Asp386 serves as the catalytic Proton acceptor. Tyr416 bears the Phosphotyrosine; by autocatalysis mark.

The protein belongs to the protein kinase superfamily. Tyr protein kinase family. SRC subfamily. Requires Mn(2+) as cofactor. The phosphorylated form is termed pp60v-src.

The catalysed reaction is L-tyrosyl-[protein] + ATP = O-phospho-L-tyrosyl-[protein] + ADP + H(+). Its function is as follows. This phosphoprotein, required for both the initiation and the maintenance of neoplastic transformation, is a protein kinase that catalyzes the phosphorylation of tyrosine residues in vitro. This is Tyrosine-protein kinase transforming protein Src (V-SRC) from Gallus gallus (Chicken).